Reading from the N-terminus, the 911-residue chain is Ribonuclease J (911 aa).

The transit peptide at 1–70 directs the protein to the chloroplast; sequence MMKPASLQGF…VTSAPASGTS (70 aa). The interval 58–90 is disordered; it reads SCSVTSAPASGTSSSSKTPRRRSGRLEGVGKSM. A compositionally biased stretch (low complexity) spans 63-74; sequence SAPASGTSSSSK. The Zn(2+) site is built by His175, His177, Asp179, His180, His245, and Asp267. Residues 336–338 and 468–472 contribute to the substrate site; these read ASN and HTSGH. Residue His494 participates in Zn(2+) binding. Disordered stretches follow at residues 695 to 723 and 735 to 824; these read VEGN…TLED and EETA…WKPE. Basic and acidic residues-rich tracts occupy residues 713 to 722 and 783 to 795; these read SPKEVDRTLE and ADTE…KENS. A compositionally biased stretch (acidic residues) spans 796–806; the sequence is RDDDELADASD. One can recognise a Myb-like domain in the interval 813–877; the sequence is PKRVRKNKWK…QCKSLWASLI (65 aa).

This sequence belongs to the metallo-beta-lactamase superfamily. RNA-metabolizing metallo-beta-lactamase-like family. Bacterial RNase J subfamily. In terms of assembly, homodimer. May be a subunit of the RNA degradosome. Requires Zn(2+) as cofactor. In terms of tissue distribution, moslty expressed in inflorescences, seedlings, leaves, flowers and flower buds, and, to a lower extent, in stems, siliques and roots.

The protein resides in the plastid. It localises to the chloroplast. In terms of biological role, essential protein required during embryogenesis, especially in initiating and maintaining the organization of shoot apical meristems (SAMs), cotyledons, and hypocotyls. Involved in auxin-mediated pathways during embryogenesis. RNase that has both endonuclease and 5'-3' exonuclease activities. Involved in RNA surveillance to prevent overaccumulation of antisense RNA. Probably involved in maturation of rRNA and in some organisms also mRNA maturation and/or decay. This chain is Ribonuclease J, found in Arabidopsis thaliana (Mouse-ear cress).